The following is a 378-amino-acid chain: Dual-specificity RNA methyltransferase RlmN (378 aa).

Glu97 serves as the catalytic Proton acceptor. A Radical SAM core domain is found at 103–341; the sequence is EGDRATLCVS…VMVRKTRGDD (239 aa). A disulfide bridge connects residues Cys110 and Cys346. Cys117, Cys121, and Cys124 together coordinate [4Fe-4S] cluster. Residues 171 to 172, Ser203, 225 to 227, and Asn303 each bind S-adenosyl-L-methionine; these read GE and SLH. Cys346 functions as the S-methylcysteine intermediate in the catalytic mechanism.

This sequence belongs to the radical SAM superfamily. RlmN family. The cofactor is [4Fe-4S] cluster.

It is found in the cytoplasm. It catalyses the reaction adenosine(2503) in 23S rRNA + 2 reduced [2Fe-2S]-[ferredoxin] + 2 S-adenosyl-L-methionine = 2-methyladenosine(2503) in 23S rRNA + 5'-deoxyadenosine + L-methionine + 2 oxidized [2Fe-2S]-[ferredoxin] + S-adenosyl-L-homocysteine. The enzyme catalyses adenosine(37) in tRNA + 2 reduced [2Fe-2S]-[ferredoxin] + 2 S-adenosyl-L-methionine = 2-methyladenosine(37) in tRNA + 5'-deoxyadenosine + L-methionine + 2 oxidized [2Fe-2S]-[ferredoxin] + S-adenosyl-L-homocysteine. Its function is as follows. Specifically methylates position 2 of adenine 2503 in 23S rRNA and position 2 of adenine 37 in tRNAs. m2A2503 modification seems to play a crucial role in the proofreading step occurring at the peptidyl transferase center and thus would serve to optimize ribosomal fidelity. In Idiomarina loihiensis (strain ATCC BAA-735 / DSM 15497 / L2-TR), this protein is Dual-specificity RNA methyltransferase RlmN.